The sequence spans 591 residues: DDB1- and CUL4-associated factor 8 (591 aa).

The span at 1–25 (MSNKRPNTTDGRTDLANGSLSSSPE) shows a compositional bias: polar residues. The segment at 1-140 (MSNKRPNTTD…EDWVSSETTA (140 aa)) is disordered. A phosphoserine mark is found at S22 and S23. The short motif at 40–51 (IEVEASDLSLSL) is the Nuclear export signal element. Basic and acidic residues-rich tracts occupy residues 66–100 (RGTD…HGHS) and 118–131 (SRDQ…RALE). S100, S123, and S124 each carry phosphoserine. 7 WD repeats span residues 185–224 (GHTG…PVLD), 228–269 (GHKS…CCKN), 275–315 (QHKG…PASK), 323–363 (EKKV…ENEN), 379–418 (ESKA…GAQY), 426–466 (RNNA…IIQF), and 470–509 (DKGG…STEL). At R198 the chain carries Omega-N-methylarginine; by PRMT1. The tract at residues 552–591 (HRRWREPGVGATDADSDESPSSSDTSDEEEGPDRVQCMPS) is disordered.

It belongs to the WD repeat DCAF8 family. Interacts with DDB1, CUL4A and CUL4B. Interacts with KPNA1, KPNB1 and XPO1. In terms of tissue distribution, expressed in the brain.

The protein localises to the nucleus. The protein resides in the cytoplasm. The protein operates within protein modification; protein ubiquitination. In terms of biological role, may function as a substrate receptor for CUL4-DDB1 E3 ubiquitin-protein ligase complex. This Mus musculus (Mouse) protein is DDB1- and CUL4-associated factor 8 (Dcaf8).